The sequence spans 417 residues: Calreticulin (417 aa).

The first 17 residues, 1-17 (MLLPVPLLLGLLGLAAA), serve as a signal peptide directing secretion. The N-domain stretch occupies residues 18–197 (DPTVYFKEQF…NSQVESGSLE (180 aa)). Ca(2+) is bound at residue Q26. K48 is subject to N6-acetyllysine. Ca(2+) contacts are provided by K62 and K64. Residue K64 is modified to N6-(2-hydroxyisobutyryl)lysine. Residues Y109, K111, Y128, and D135 each contribute to the an alpha-D-glucoside site. C137 and C163 are disulfide-bonded. Position 159 is an N6-acetyllysine (K159). N179 is a glycosylation site (N-linked (GlcNAc...) asparagine). A 1-1 repeat occupies 191-202 (VESGSLEDDWDF). The 4 X approximate repeats stretch occupies residues 191–255 (VESGSLEDDW…DAKKPEDWDE (65 aa)). The segment at 193–270 (SGSLEDDWDF…WEPPVIQNPE (78 aa)) is disordered. Positions 198-308 (DDWDFLPPKK…YSPDSNIYAY (111 aa)) are P-domain. Over residues 207–251 (KIKDPDAAKPEDWDDRAKIDDPTDSKPEDWDKPEHIPDPDAKKPE) the composition is skewed to basic and acidic residues. K209 carries the N6-acetyllysine modification. 6 repeat units span residues 210 to 221 (DPDAAKPEDWDD), 227 to 238 (DPTDSKPEDWDK), 244 to 255 (DPDAKKPEDWDE), 259 to 269 (GEWEPPVIQNP), 273 to 283 (GEWKPRQIDNP), and 287 to 297 (GIWIHPEIDNP). The interval 237–270 (DKPEHIPDPDAKKPEDWDEEMDGEWEPPVIQNPE) is interaction with PPIB. Positions 252–261 (DWDEEMDGEW) are enriched in acidic residues. Residues 259 to 297 (GEWEPPVIQNPEYKGEWKPRQIDNPEYKGIWIHPEIDNP) are 3 X approximate repeats. The segment at 309–417 (ENFAVLGLDL…AAAGQAKDEL (109 aa)) is C-domain. D317 serves as a coordination point for an alpha-D-glucoside. D328 lines the Ca(2+) pocket. The disordered stretch occupies residues 350 to 417 (TKAAEKQMKD…AAAGQAKDEL (68 aa)). Basic and acidic residues predominate over residues 352–378 (AAEKQMKDKQDEEQRLHEEEEEKKGKE). The span at 379–408 (EEEADKDDDEDKDEDEEDEDEKEEEEEEDA) shows a compositional bias: acidic residues. The Prevents secretion from ER signature appears at 414-417 (KDEL).

The protein belongs to the calreticulin family. Monomer. Component of an EIF2 complex at least composed of CELF1/CUGBP1, CALR, CALR3, EIF2S1, EIF2S2, HSP90B1 and HSPA5. Interacts with PDIA3/ERp57 and SPACA9. Interacts with TRIM21. Interacts with NR3C1. Interacts with PPIB. Interacts (via P-domain) with PDIA5. Interacts with GABARAP. Interacts with CLCC1.

It localises to the endoplasmic reticulum lumen. It is found in the cytoplasm. The protein localises to the cytosol. Its subcellular location is the secreted. The protein resides in the extracellular space. It localises to the extracellular matrix. It is found in the cell surface. The protein localises to the sarcoplasmic reticulum lumen. Its subcellular location is the cytoplasmic vesicle. The protein resides in the secretory vesicle. It localises to the cortical granule. It is found in the cytolytic granule. Functionally, calcium-binding chaperone that promotes folding, oligomeric assembly and quality control in the endoplasmic reticulum (ER) via the calreticulin/calnexin cycle. This lectin interacts transiently with almost all of the monoglucosylated glycoproteins that are synthesized in the ER. Interacts with the DNA-binding domain of NR3C1 and mediates its nuclear export. Involved in maternal gene expression regulation. May participate in oocyte maturation via the regulation of calcium homeostasis. Present in the cortical granules of non-activated oocytes, is exocytosed during the cortical reaction in response to oocyte activation and might participate in the block to polyspermy. This is Calreticulin (CALR) from Bos taurus (Bovine).